The sequence spans 217 residues: Protein-L-isoaspartate O-methyltransferase 2 (217 aa).

S62 is an active-site residue.

Belongs to the methyltransferase superfamily. L-isoaspartyl/D-aspartyl protein methyltransferase family.

The protein resides in the cytoplasm. It catalyses the reaction [protein]-L-isoaspartate + S-adenosyl-L-methionine = [protein]-L-isoaspartate alpha-methyl ester + S-adenosyl-L-homocysteine. Its function is as follows. Catalyzes the methyl esterification of L-isoaspartyl residues in peptides and proteins that result from spontaneous decomposition of normal L-aspartyl and L-asparaginyl residues. It plays a role in the repair and/or degradation of damaged proteins. The polypeptide is Protein-L-isoaspartate O-methyltransferase 2 (Geotalea uraniireducens (strain Rf4) (Geobacter uraniireducens)).